Consider the following 432-residue polypeptide: Adenylosuccinate synthetase (432 aa).

GTP is bound by residues 13 to 19 (GDEGKGK) and 41 to 43 (GHT). Aspartate 14 functions as the Proton acceptor in the catalytic mechanism. Aspartate 14 and glycine 41 together coordinate Mg(2+). IMP contacts are provided by residues 14–17 (DEGK), 39–42 (NAGH), threonine 130, arginine 144, glutamine 225, threonine 240, and arginine 304. Histidine 42 serves as the catalytic Proton donor. Residue 300-306 (ATTGRKR) participates in substrate binding. GTP-binding positions include arginine 306, 332–334 (KLD), and 414–416 (STG).

Belongs to the adenylosuccinate synthetase family. As to quaternary structure, homodimer. The cofactor is Mg(2+).

The protein resides in the cytoplasm. It carries out the reaction IMP + L-aspartate + GTP = N(6)-(1,2-dicarboxyethyl)-AMP + GDP + phosphate + 2 H(+). The protein operates within purine metabolism; AMP biosynthesis via de novo pathway; AMP from IMP: step 1/2. Functionally, plays an important role in the de novo pathway of purine nucleotide biosynthesis. Catalyzes the first committed step in the biosynthesis of AMP from IMP. The protein is Adenylosuccinate synthetase of Alkalilimnicola ehrlichii (strain ATCC BAA-1101 / DSM 17681 / MLHE-1).